We begin with the raw amino-acid sequence, 477 residues long: 23S rRNA (uracil(1939)-C(5))-methyltransferase RlmD (477 aa).

A TRAM domain is found at K7 to A66. [4Fe-4S] cluster is bound by residues C79, C89, C92, and C171. Residues Q280, F309, N314, E330, N365, and D386 each coordinate S-adenosyl-L-methionine. C432 functions as the Nucleophile in the catalytic mechanism.

The protein belongs to the class I-like SAM-binding methyltransferase superfamily. RNA M5U methyltransferase family. RlmD subfamily.

It catalyses the reaction uridine(1939) in 23S rRNA + S-adenosyl-L-methionine = 5-methyluridine(1939) in 23S rRNA + S-adenosyl-L-homocysteine + H(+). Catalyzes the formation of 5-methyl-uridine at position 1939 (m5U1939) in 23S rRNA. The chain is 23S rRNA (uracil(1939)-C(5))-methyltransferase RlmD from Albidiferax ferrireducens (strain ATCC BAA-621 / DSM 15236 / T118) (Rhodoferax ferrireducens).